The sequence spans 155 residues: Probable Brix domain-containing ribosomal biogenesis protein (155 aa).

In terms of domain architecture, Brix spans 1–155 (MLLTTSRKPS…LLIRDFRVGE (155 aa)).

Its function is as follows. Probably involved in the biogenesis of the ribosome. This Methanothermobacter thermautotrophicus (strain ATCC 29096 / DSM 1053 / JCM 10044 / NBRC 100330 / Delta H) (Methanobacterium thermoautotrophicum) protein is Probable Brix domain-containing ribosomal biogenesis protein.